Reading from the N-terminus, the 505-residue chain is Holliday junction branch migration ATPase PINA (505 aa).

In terms of domain architecture, PINc spans 2–106 (NDLMLDKSAL…IVTADETQKK (105 aa)). The interval 434-505 (PVNRGITMSN…NIKIKIKLSD (72 aa)) is KH domain. The interval 493-505 (KKNNIKIKIKLSD) is required for maximum interaction with Hjc and Hjm.

Homohexamer; the central pore (25-31 Angstroms) is large enough to hold dsDNA. In PDB:5F4H two of the 6 subunits are in an ATP-binding competent conformation. Interacts with Holliday junction resolvase Hjc; in the presence of HJ DNA this interaction decreases branch migration but not Y-DNA unwinding. Interacts with helicase Hjm (hel308) which decreases the DNA helicase activity of Hjm. Requires Ca(2+) as cofactor.

It catalyses the reaction ATP + H2O = ADP + phosphate + H(+). Its function is as follows. Promotes Holliday junction (HJ) branch migration and unwinds Y-shaped DNA (but not replication forks or dsDNA) in an ATP hydrolysis-dependent manner. Stimulates cleavage by HJ resolvase Hjc. Unwinds Y-shaped and 3'-flap DNA substrates. In the absence of other proteins stabilizes replication forks (prevents spontaneous unwinding); Hjc, Hjm (Hel308) and PINA coordinate HJ migration and cleavage of replication forks in a coordinated way. Inhibits the 5'-3' (but not 3'-5') helicase activity of helicase Hjm (Hel308) on overhang DNA. Probably acts as an ATP-dependent pump that pulls DNA through the hexamer. This Saccharolobus islandicus (strain REY15A) (Sulfolobus islandicus) protein is Holliday junction branch migration ATPase PINA.